We begin with the raw amino-acid sequence, 463 residues long: Glucagon-like peptide 1 receptor (463 aa).

An N-terminal signal peptide occupies residues 1–21 (MASTPSLLRLALLLLGAVGRA). Topologically, residues 22–139 (GPRPQGTTVS…KRGERNFPEE (118 aa)) are extracellular. 3 disulfides stabilise this stretch: cysteine 46–cysteine 71, cysteine 62–cysteine 104, and cysteine 85–cysteine 126. N-linked (GlcNAc...) asparagine glycans are attached at residues asparagine 63, asparagine 82, and asparagine 115. Residues 140–164 (QLLSLYIIYTVGYALSFSALVIASA) form a helical membrane-spanning segment. At 165-175 (ILVGFRHLHCT) the chain is on the cytoplasmic side. A helical membrane pass occupies residues 176–201 (RNYIHLNLFASFILRALSVFIKDAAL). Topologically, residues 202-227 (KWMYSTAAQQHQWDGLLSYQDSLGCR) are extracellular. A disulfide bridge connects residues cysteine 226 and cysteine 296. The helical transmembrane segment at 228-251 (LVFLLMQYCVAANYYWLLVEGVYL) threads the bilayer. At 252–265 (YTLLAFSVFSEQRI) the chain is on the cytoplasmic side. The helical transmembrane segment at 266–290 (FKLYLSIGWGVPLLFVIPWGIVKYL) threads the bilayer. Over 291 to 305 (YEDEGCWTRNSNMNY) the chain is Extracellular. A helical transmembrane segment spans residues 306 to 328 (WLIIRLPILFAIGVNFLIFIRVI). Topologically, residues 329–348 (CIVVSKLKANLMCKTDIKCR) are cytoplasmic. Cysteine 341 is subject to ADP-ribosylcysteine. An ADP-ribosylarginine modification is found at arginine 348. The helical transmembrane segment at 349 to 370 (LAKSTLTLIPLLGTHEVIFAFV) threads the bilayer. Positions 352–355 (STLT) are important for allosteric inhibitor binding. The Extracellular portion of the chain corresponds to 371–383 (MDEHARGTLRFIK). Residues 384-404 (LFTELSFTSFQGLMVAILYCF) traverse the membrane as a helical segment. Residues 405-463 (VNNEVQMEFRKCWERWRLEHLNIQRDCSMKPLKCPTSSVSSGATVGSSVYAATCQSSYS) lie on the Cytoplasmic side of the membrane.

This sequence belongs to the G-protein coupled receptor 2 family. As to quaternary structure, may form homodimers and heterodimers with GIPR. N-glycosylation enhances cell surface expression and lengthens receptor half-life by preventing degradation in the ER. In terms of tissue distribution, detected in pancreatic islets (at protein level). Detected in pancreatic islets and lungs.

The protein localises to the cell membrane. Functionally, G-protein coupled receptor for glucagon-like peptide 1 (GLP-1). Ligand binding triggers activation of a signaling cascade that leads to the activation of adenylyl cyclase and increased intracellular cAMP levels. Plays a role in regulating insulin secretion in response to GLP-1. This is Glucagon-like peptide 1 receptor (Glp1r) from Mus musculus (Mouse).